The primary structure comprises 212 residues: Adenine phosphoribosyltransferase (212 aa).

Belongs to the purine/pyrimidine phosphoribosyltransferase family. In terms of assembly, homodimer.

The protein localises to the cytoplasm. It catalyses the reaction AMP + diphosphate = 5-phospho-alpha-D-ribose 1-diphosphate + adenine. It participates in purine metabolism; AMP biosynthesis via salvage pathway; AMP from adenine: step 1/1. Catalyzes a salvage reaction resulting in the formation of AMP, that is energically less costly than de novo synthesis. This is Adenine phosphoribosyltransferase from Mycobacterium tuberculosis (strain CDC 1551 / Oshkosh).